Here is a 331-residue protein sequence, read N- to C-terminus: Heme A synthase (331 aa).

8 consecutive transmembrane segments (helical) span residues 6 to 26 (VAIW…IGGF), 87 to 107 (YVHR…FIYF), 124 to 144 (ALLF…SGLV), 154 to 174 (LALH…QFFD), 193 to 213 (IWII…VAGL), 251 to 271 (VQFI…ILTI), 279 to 299 (LYVM…TLLL), and 301 to 321 (IPMA…GSGL). His255 contacts heme. His309 is a binding site for heme.

It belongs to the COX15/CtaA family. Type 2 subfamily. Interacts with CtaB. Heme b serves as cofactor.

The protein resides in the cell membrane. It catalyses the reaction Fe(II)-heme o + 2 A + H2O = Fe(II)-heme a + 2 AH2. Its pathway is porphyrin-containing compound metabolism; heme A biosynthesis; heme A from heme O: step 1/1. Functionally, catalyzes the conversion of heme O to heme A by two successive hydroxylations of the methyl group at C8. The first hydroxylation forms heme I, the second hydroxylation results in an unstable dihydroxymethyl group, which spontaneously dehydrates, resulting in the formyl group of heme A. This chain is Heme A synthase, found in Wolbachia pipientis subsp. Culex pipiens (strain wPip).